The chain runs to 162 residues: Transcription elongation factor GreB (162 aa).

Residues 52–73 (KKLLREIDRRVRYLRKRLEDVK) adopt a coiled-coil conformation.

Belongs to the GreA/GreB family. GreB subfamily.

Its function is as follows. Necessary for efficient RNA polymerase transcription elongation past template-encoded arresting sites. The arresting sites in DNA have the property of trapping a certain fraction of elongating RNA polymerases that pass through, resulting in locked ternary complexes. Cleavage of the nascent transcript by cleavage factors such as GreA or GreB allows the resumption of elongation from the new 3'terminus. GreB releases sequences of up to 9 nucleotides in length. In Pseudomonas putida (strain ATCC 47054 / DSM 6125 / CFBP 8728 / NCIMB 11950 / KT2440), this protein is Transcription elongation factor GreB.